A 298-amino-acid polypeptide reads, in one-letter code: Anamorsin homolog (298 aa).

An N-terminal SAM-like domain region spans residues 1–143 (MTQLIITHQS…IKAEKPSWKP (143 aa)). The tract at residues 143 to 162 (PEEGKVLVDDIDLEGSVPDI) is linker. Residues Cys-175, Cys-182, Cys-185, and Cys-187 each coordinate [2Fe-2S] cluster. Positions 175 to 187 (CKSKERACNNCNC) are fe-S binding site A. Residues Cys-218, Cys-221, Cys-229, and Cys-232 each contribute to the [4Fe-4S] cluster site. Short sequence motifs (cx2C motif) lie at residues 218–221 (CGNC) and 229–232 (CSGC). Residues 218–232 (CGNCYLGDAFRCSGC) form a fe-S binding site B region.

This sequence belongs to the anamorsin family. Monomer. Requires [2Fe-2S] cluster as cofactor. The cofactor is [4Fe-4S] cluster.

It localises to the cytoplasm. The protein resides in the mitochondrion intermembrane space. Its function is as follows. Component of the cytosolic iron-sulfur (Fe-S) protein assembly (CIA) machinery. Required for the maturation of extramitochondrial Fe-S proteins. Part of an electron transfer chain functioning in an early step of cytosolic Fe-S biogenesis, facilitating the de novo assembly of a [4Fe-4S] cluster on the cytosolic Fe-S scaffold complex. Electrons are transferred from NADPH via a FAD- and FMN-containing diflavin oxidoreductase. Together with the diflavin oxidoreductase, also required for the assembly of the diferric tyrosyl radical cofactor of ribonucleotide reductase (RNR), probably by providing electrons for reduction during radical cofactor maturation in the catalytic small subunit. The polypeptide is Anamorsin homolog (Cryptosporidium parvum (strain Iowa II)).